A 204-amino-acid polypeptide reads, in one-letter code: High frequency lysogenization protein HflD homolog (204 aa).

The protein belongs to the HflD family.

Its subcellular location is the cytoplasm. It localises to the cell inner membrane. In Aeromonas hydrophila subsp. hydrophila (strain ATCC 7966 / DSM 30187 / BCRC 13018 / CCUG 14551 / JCM 1027 / KCTC 2358 / NCIMB 9240 / NCTC 8049), this protein is High frequency lysogenization protein HflD homolog.